The chain runs to 318 residues: 1-aminocyclopropane-1-carboxylate oxidase 1 (318 aa).

The region spanning 153 to 254 is the Fe2OG dioxygenase domain; that stretch reads PTFGTKVSNY…RMSIASFYNP (102 aa). The Fe cation site is built by His177, Asp179, and His234.

It belongs to the iron/ascorbate-dependent oxidoreductase family. Fe cation is required as a cofactor. As to expression, fruit.

The catalysed reaction is 1-aminocyclopropane-1-carboxylate + L-ascorbate + O2 = ethene + L-dehydroascorbate + hydrogen cyanide + CO2 + 2 H2O. It participates in alkene biosynthesis; ethylene biosynthesis via S-adenosyl-L-methionine; ethylene from S-adenosyl-L-methionine: step 2/2. This Cucumis melo (Muskmelon) protein is 1-aminocyclopropane-1-carboxylate oxidase 1 (ACO1).